A 426-amino-acid chain; its full sequence is Target of rapamycin complex 2 subunit AVO2 (426 aa).

ANK repeat units follow at residues 4–33 (EPSVRLREAIIEGNLLIVKRLLRRNPDLLT), 39–68 (NGWSSLHYASYHGRYLICVYLIQLGHDKHE), 74–104 (KGNTCVHLALMKGHEQTLHLLLQQFPRFINH), 108–137 (NGRAPIHIACMNDYYQCLSLLIGVGADLWV), and 141–171 (NGDTPLHVCLEYGSISCMKMLLNEGEVSLDD). The disordered stretch occupies residues 259 to 302 (STHTTSGNGGNRRSSITNPVFNPRKPTLSTDSFSSSSNSSSRLR). Polar residues predominate over residues 260-278 (THTTSGNGGNRRSSITNPV). Low complexity predominate over residues 285–302 (TLSTDSFSSSSNSSSRLR). Phosphoserine occurs at positions 315 and 350. Over residues 350-359 (SNDNVRGDSQ) the composition is skewed to polar residues. The disordered stretch occupies residues 350–392 (SNDNVRGDSQTATINDDGGGGNGGDATIGMGLRKDPDDENENK). A compositionally biased stretch (gly residues) spans 366 to 375 (DGGGGNGGDA). Residues 381–392 (LRKDPDDENENK) are compositionally biased toward basic and acidic residues.

In terms of assembly, the target of rapamycin complex 2 (TORC2) is composed of at least AVO1, AVO2, BIT61, LST8, TOR2 and TSC11. TORC2 forms a homodimer. Contrary to TORC1, TORC2 does not bind to and is not sensitive to FKBP-rapamycin. AVO2 is peripherally associated to AVO1 and TSC11.

It localises to the cell membrane. Its subcellular location is the vacuole membrane. Component of TORC2, which regulates cell cycle-dependent polarization of the actin-cytoskeleton and cell wall integrity. TORC2 controls polarity of the actin cytoskeleton, which is required for orienting the secretory pathway toward discrete growth sites, via the RHO1/PKC1/MAPK cell integrity pathway. The protein is Target of rapamycin complex 2 subunit AVO2 (AVO2) of Saccharomyces cerevisiae (strain ATCC 204508 / S288c) (Baker's yeast).